The chain runs to 242 residues: Venom nerve growth factor 1 (242 aa).

Residues 1 to 18 form the signal peptide; it reads MSMLCYTLIIAFLIGIWA. Positions 19 to 125 are excised as a propeptide; the sequence is APQSEDNVPL…ALNRNIQAKR (107 aa). 3 disulfides stabilise this stretch: Cys-139–Cys-203, Cys-181–Cys-231, and Cys-191–Cys-233.

It belongs to the NGF-beta family. As to quaternary structure, homodimer; non-covalently linked. Expressed by the venom gland.

The protein resides in the secreted. In terms of biological role, nerve growth factor is important for the development and maintenance of the sympathetic and sensory nervous systems. It stimulates division and differentiation of sympathetic and embryonic sensory neurons as well as basal forebrain cholinergic neurons in the brain. Its relevance in the snake venom is not clear. However, it has been shown to inhibit metalloproteinase-dependent proteolysis of platelet glycoprotein Ib alpha, suggesting a metalloproteinase inhibition to prevent metalloprotease autodigestion and/or protection against prey proteases. Binds a lipid between the two protein chains in the homodimer. The lipid-bound form promotes histamine relase from mouse mast cells, contrary to the lipid-free form. This chain is Venom nerve growth factor 1, found in Pseudechis australis (Mulga snake).